A 358-amino-acid polypeptide reads, in one-letter code: MKMLQGVRAFQKLKKSCAYSTAAKELKPLPVKETVNMAYDLHLPERSVIGKMPYHSPEPIVFIHGLFGWKRFYRNDCKTLATALQTPVYAVDMRNHGDTEHAMPFDYNTLMDDLVLLLRKLDIKKVNLIGYSMGGKMSMLTALNYPELVSSACIIDNAPINQPHISPFLKVFSKSCQHVENMKIRATDKEWRSKVAVGLKRYIPNPGIRSYLLQNVSGTPPKKYRSPVIDWNDGNVHFVNPVNHLFQCVVKDASAWPVEQVAGKQFLGPVNFIRGTKSEFVNADGEKAIAEYFPYHKIQSINTTHNVLHERPQEYLRSVIDFFKTTRYVLERKRDSERVTMIAKPKPLTSSQNAAEYS.

Residues 59-166 (PIVFIHGLFG…NAPINQPHIS (108 aa)) form the AB hydrolase-1 domain. Active-site charge relay system residues include Ser132, Asp156, and His305.

This sequence belongs to the AB hydrolase superfamily.

It is found in the mitochondrion. The enzyme catalyses ethanol + acetyl-CoA = ethyl acetate + CoA. It carries out the reaction acetyl-CoA + H2O = acetate + CoA + H(+). It catalyses the reaction ethyl acetate + H2O = ethanol + acetate + H(+). Functionally, alcohol acetyltransferase that catalyzes the synthesis of ethyl acetate from ethanol and acetyl-CoA. Can also function as a thioesterase by hydrolyzing acetyl-CoA in the absence of ethanol, as well as esterase hydrolyzing ethyl acetate. This chain is Ethanol acetyltransferase 1 (EAT1), found in Eremothecium cymbalariae (strain CBS 270.75 / DBVPG 7215 / KCTC 17166 / NRRL Y-17582) (Yeast).